The primary structure comprises 232 residues: Ribonuclease HII (232 aa).

An RNase H type-2 domain is found at 26–218; it reads RILCGVDEAG…VRRALEGMSA (193 aa). 3 residues coordinate a divalent metal cation: D32, E33, and D127.

It belongs to the RNase HII family. Requires Mn(2+) as cofactor. Mg(2+) serves as cofactor.

It localises to the cytoplasm. It carries out the reaction Endonucleolytic cleavage to 5'-phosphomonoester.. Functionally, endonuclease that specifically degrades the RNA of RNA-DNA hybrids. This is Ribonuclease HII from Ralstonia pickettii (strain 12J).